A 155-amino-acid chain; its full sequence is MRKNRAEKRDVLADPIYNSKLVTRAINKIMLDGKRGIAQSIIYDAFNIIKEKTNKEPIEVFNKAIENIKPHLELKVRRIGGANYQVPVEVSAERQITLALRWLINYARLRNEKVMTIKLANEIIDASNNIGGSVKKREDTHKMAEANKAFAHYRW.

This sequence belongs to the universal ribosomal protein uS7 family. In terms of assembly, part of the 30S ribosomal subunit. Contacts proteins S9 and S11.

In terms of biological role, one of the primary rRNA binding proteins, it binds directly to 16S rRNA where it nucleates assembly of the head domain of the 30S subunit. Is located at the subunit interface close to the decoding center, probably blocks exit of the E-site tRNA. This Mycoplasma capricolum subsp. capricolum (strain California kid / ATCC 27343 / NCTC 10154) protein is Small ribosomal subunit protein uS7.